The sequence spans 475 residues: Protein translocase subunit SecD (475 aa).

A run of 6 helical transmembrane segments spans residues 7–27 (LLITVTLLAFSVWALWPSLKF), 313–333 (KGFMSSLIGIVLVFLFMFIYY), 338–358 (LIADVALSLNLIILMAIMAYL), 364–384 (LPGVAGIALTLAMSVDANVLI), 410–430 (FWTIFDANFTTLIAALFLFQF), and 437–457 (GFAVTLSIGLIVSMFTAVTVT).

Belongs to the SecD/SecF family. SecD subfamily. In terms of assembly, forms a complex with SecF. Part of the essential Sec protein translocation apparatus which comprises SecA, SecYEG and auxiliary proteins SecDF. Other proteins may also be involved.

It localises to the cell inner membrane. Part of the Sec protein translocase complex. Interacts with the SecYEG preprotein conducting channel. SecDF uses the proton motive force (PMF) to complete protein translocation after the ATP-dependent function of SecA. The chain is Protein translocase subunit SecD from Endomicrobium trichonymphae.